The sequence spans 699 residues: tRNA 5-methylaminomethyl-2-thiouridine biosynthesis bifunctional protein MnmC (699 aa).

A tRNA (mnm(5)s(2)U34)-methyltransferase region spans residues 1 to 260 (MTAKPHISCQ…ERKLLRQQAN (260 aa)). The tract at residues 282–699 (IGGGLASAHL…LRKLLKGKAL (418 aa)) is FAD-dependent cmnm(5)s(2)U34 oxidoreductase.

The protein in the N-terminal section; belongs to the methyltransferase superfamily. tRNA (mnm(5)s(2)U34)-methyltransferase family. In the C-terminal section; belongs to the DAO family. FAD serves as cofactor.

The protein resides in the cytoplasm. The enzyme catalyses 5-aminomethyl-2-thiouridine(34) in tRNA + S-adenosyl-L-methionine = 5-methylaminomethyl-2-thiouridine(34) in tRNA + S-adenosyl-L-homocysteine + H(+). Functionally, catalyzes the last two steps in the biosynthesis of 5-methylaminomethyl-2-thiouridine (mnm(5)s(2)U) at the wobble position (U34) in tRNA. Catalyzes the FAD-dependent demodification of cmnm(5)s(2)U34 to nm(5)s(2)U34, followed by the transfer of a methyl group from S-adenosyl-L-methionine to nm(5)s(2)U34, to form mnm(5)s(2)U34. This chain is tRNA 5-methylaminomethyl-2-thiouridine biosynthesis bifunctional protein MnmC, found in Shewanella oneidensis (strain ATCC 700550 / JCM 31522 / CIP 106686 / LMG 19005 / NCIMB 14063 / MR-1).